Consider the following 104-residue polypeptide: Large ribosomal subunit protein uL24 (104 aa).

Belongs to the universal ribosomal protein uL24 family. Part of the 50S ribosomal subunit.

Functionally, one of two assembly initiator proteins, it binds directly to the 5'-end of the 23S rRNA, where it nucleates assembly of the 50S subunit. In terms of biological role, one of the proteins that surrounds the polypeptide exit tunnel on the outside of the subunit. This is Large ribosomal subunit protein uL24 from Rhodopseudomonas palustris (strain BisB5).